Reading from the N-terminus, the 394-residue chain is THAP domain-containing protein 5 (394 aa).

The THAP-type zinc finger occupies 1 to 84 (MPRYCAAICC…LKQTAIPTIF (84 aa)). The disordered stretch occupies residues 86 to 109 (LPEDNQEKDPSKKKSQKKKLKSEK). The HCFC1-binding motif (HBM) signature appears at 320–323 (EHSY). A coiled-coil region spans residues 347–381 (LELQEQQTLGRLKSLEALIRQLKQENWLSEENVKI).

Interacts with HTRA2; under apoptotic conditions. Interacts with ABRAXAS2. In terms of processing, cleaved by HTRA2 during apoptosis.

The protein localises to the nucleus. In terms of biological role, has sequence-specific DNA-binding activity and can function as transcriptional repressor (in vitro). May be a regulator of cell cycle: THAP5 overexpression in human cell lines causes cell cycle arrest at G2/M phase. This is THAP domain-containing protein 5 (THAP5) from Bos taurus (Bovine).